Consider the following 513-residue polypeptide: ATP synthase subunit alpha 2 (513 aa).

169-176 (GDRQTGKT) is a binding site for ATP.

This sequence belongs to the ATPase alpha/beta chains family. As to quaternary structure, F-type ATPases have 2 components, CF(1) - the catalytic core - and CF(0) - the membrane proton channel. CF(1) has five subunits: alpha(3), beta(3), gamma(1), delta(1), epsilon(1). CF(0) has three main subunits: a(1), b(2) and c(9-12). The alpha and beta chains form an alternating ring which encloses part of the gamma chain. CF(1) is attached to CF(0) by a central stalk formed by the gamma and epsilon chains, while a peripheral stalk is formed by the delta and b chains.

Its subcellular location is the cell inner membrane. The enzyme catalyses ATP + H2O + 4 H(+)(in) = ADP + phosphate + 5 H(+)(out). In terms of biological role, produces ATP from ADP in the presence of a proton gradient across the membrane. The alpha chain is a regulatory subunit. This is ATP synthase subunit alpha 2 from Shewanella frigidimarina (strain NCIMB 400).